The sequence spans 497 residues: MGESVKAIKLKILDMFLDPECTKQDDNWRKDLSTMSRFCAEAGNMCLRDLYNYFSMPKEDRISSKDLYNAMYHKTKLLHPELPGKVANQIVNHAKDVWKRNAKLIYRNQISMPTYKITTAPIRLQNNIYKLIKNKNKYIIDVQLYSKEYSKDSGKGTHRYFLVAVRDSSTRMIFDRIMSKDHIDSSKSYTQGQLQIKKDHQGKWYCIIPYTFPTHETVLDPDKVMGVDLGVAKAVYWAFNSSYKRGCIDGGEIEHFRKMIRARRVSIQNQIKHSGDARKGHGRKRALKPIETLSEKEKNFRDTINHRYANRIVEAAIKQGCGTIQIENLEGIADTTGSKFLKNWPYYDLQTKIVNKAKEHGITVVAINPQYTSQRCSMCGYIEKTNRSSQAVFECKQCGYGSRTICINCRHVQVSGDVCEECGGIVKKENVNADYNAAKNISTPYIDQIIMEKCLELGIPYRSITCKECGHIQASGNTCEVCGSTNILKPKKIRKAK.

Positions 29–122 (RKDLSTMSRF…PTYKITTAPI (94 aa)) are recognition domain (REC). The segment at 123 to 214 (RLQNNIYKLI…YCIIPYTFPT (92 aa)) is wedge domain (WED). The tract at residues 215-223 (HETVLDPDK) is linker. The ruvC-I stretch occupies residues 224 to 374 (VMGVDLGVAK…VAINPQYTSQ (151 aa)). Catalysis depends on residues aspartate 228 and glutamate 327. The tract at residues 375-432 (RCSMCGYIEKTNRSSQAVFECKQCGYGSRTICINCRHVQVSGDVCEECGGIVKKENVN) is target nucleic acid-binding (TNB). Residues cysteine 376, cysteine 379, cysteine 395, and cysteine 398 each contribute to the Zn(2+) site. Residues 433–453 (ADYNAAKNISTPYIDQIIMEK) form a ruvC-II region. Residue aspartate 434 is part of the active site.

This sequence belongs to the CRISPR-associated endonuclease Cas12f family. As to quaternary structure, an asymmetric homodimer. Guide RNA is probably required for dimerization. The cofactor is Mg(2+). Zn(2+) serves as cofactor.

Its function is as follows. CRISPR (clustered regularly interspaced short palindromic repeat), is an adaptive immune system that provides protection against mobile genetic elements (viruses, transposable elements and conjugative plasmids). CRISPR clusters contain sequences complementary to antecedent mobile elements and target invading nucleic acids. CRISPR clusters are transcribed and processed into CRISPR RNA (crRNA), which requires a trans-encoded small RNA (tracrRNA), but not this protein. Recognizes a short motif in the CRISPR repeat sequences (the 5' PAM or protospacer adjacent motif, TTC in this organism) to help distinguish self versus nonself, as targets within the CRISPR locus do not have PAMs. Has dsDNA endonuclease activity upon expression in E.coli of this protein, a mini CRISPR array and the probable tracrRNA. Plasmid cleavage is centered around positions 24 base pairs 3' of PAM. The mini system protects E.coli against transformation by foreign plasmids. The sequence is that of CRISPR-associated endodeoxyribonuclease Cas12f1 from Syntrophomonas palmitatica (strain DSM 18709 / JCM 14374 / NBRC 102128 / MPA).